A 224-amino-acid polypeptide reads, in one-letter code: Envelope glycoprotein L (224 aa).

The N-terminal stretch at 1–16 (MGFVCLFGLVVMGAWG) is a signal peptide. Residues 20-161 (GSQATEYVLR…FDYSRTRRCV (142 aa)) form an interaction with gH region. Residues 23-201 (ATEYVLRSVI…LATQPPVLAL (179 aa)) form the gL alphaherpesvirus-type domain. Cystine bridges form between Cys-44/Cys-76 and Cys-149/Cys-160. A disordered region spans residues 168 to 224 (PANTTSTWEPPVSSDDEASSQSKPLATQPPVLALSNAPPRRVSPTRGRRRHTRLRRN). Residues 213 to 224 (RGRRRHTRLRRN) are compositionally biased toward basic residues.

This sequence belongs to the herpesviridae glycoprotein L (gL) family. Alphaherpesvirinae gL subfamily. In terms of assembly, interacts with glycoprotein H (gH); this interaction is necessary for the correct processing and cell surface expression of gH. The heterodimer gH/gL seems to interact with gB trimers during fusion.

It localises to the virion membrane. It is found in the host cell membrane. The protein localises to the host Golgi apparatus. The protein resides in the host trans-Golgi network. The heterodimer glycoprotein H-glycoprotein L is required for the fusion of viral and plasma membranes leading to virus entry into the host cell. Acts as a functional inhibitor of gH and maintains gH in an inhibited form. Upon binding to host integrins, gL dissociates from gH leading to activation of the viral fusion glycoproteins gB and gH. The protein is Envelope glycoprotein L of Homo sapiens (Human).